Here is a 72-residue protein sequence, read N- to C-terminus: UPF0352 protein CGSHiGG_07710 (72 aa).

The protein belongs to the UPF0352 family.

This chain is UPF0352 protein CGSHiGG_07710, found in Haemophilus influenzae (strain PittGG).